The following is a 375-amino-acid chain: Protein abhd-3.2 (375 aa).

Residues 108 to 203 (PIVVFLPGIT…ILWNYLAMTG (96 aa)) enclose the AB hydrolase-1 domain. Active-site charge relay system residues include serine 189, aspartate 315, and histidine 344.

Belongs to the AB hydrolase superfamily. AB hydrolase 4 family.

The chain is Protein abhd-3.2 from Caenorhabditis elegans.